Reading from the N-terminus, the 466-residue chain is Delta-1 crystallin (466 aa).

It belongs to the lyase 1 family. Argininosuccinate lyase subfamily. As to quaternary structure, homotetramer. Eye lens.

Delta crystallin, the principal crystallin in embryonic lens, is found only in birds and reptiles. Despite possessing the necessary catalytic residues, this protein does not function as an enzymatically active argininosuccinate lyase. This is Delta-1 crystallin (ASL1) from Anas platyrhynchos (Mallard).